A 33-amino-acid chain; its full sequence is Cysteine-rich venom protein tripurin (33 aa).

It belongs to the CRISP family. In terms of processing, contains 8 disulfide bonds. In terms of tissue distribution, expressed by the venom gland.

It is found in the secreted. Blocks contraction of smooth muscle elicited by high potassium-induced depolarization, but does not block caffeine-stimulated contraction. May target voltage-gated calcium channels on smooth muscle. This Trimeresurus purpureomaculatus (Mangrove pit viper) protein is Cysteine-rich venom protein tripurin.